A 646-amino-acid chain; its full sequence is A-kinase anchor protein 8-like (646 aa).

The segment at methionine 1–threonine 268 is sufficient for activation of CTE-mediated expression. Position 208 is an asymmetric dimethylarginine; alternate (arginine 208). At arginine 208 the chain carries Omega-N-methylarginine; alternate. Residues arginine 217, arginine 237, and arginine 247 each carry the omega-N-methylarginine modification. Lysine 257 is modified (N6-acetyllysine). The interval lysine 264–aspartate 381 is disordered. The residue at position 267 (threonine 267) is a Phosphothreonine. A Nuclear localization signal motif is present at residues lysine 274–lysine 279. Positions glutamine 280–cysteine 296 match the Nuclear export signal (NES) motif. Serine 283 carries the post-translational modification Phosphoserine. The segment covering proline 287–cysteine 296 has biased composition (basic and acidic residues). Threonine 292 carries the post-translational modification Phosphothreonine. Position 297 is a phosphoserine (serine 297). Residues aspartate 298–glutamate 314 are compositionally biased toward acidic residues. A compositionally biased stretch (basic and acidic residues) spans glutamate 337 to lysine 349. Residues lysine 362–lysine 364 carry the Nuclear localization signal motif. C2H2 AKAP95-type zinc fingers lie at residues cysteine 391 to histidine 413 and cysteine 484 to histidine 507. A disordered region spans residues glycine 545–proline 646. Serine 552 is modified (phosphoserine). Residues serine 552 to glutamate 563 are compositionally biased toward acidic residues. Residues glycine 564–proline 586 are compositionally biased toward low complexity. Positions alanine 587 to proline 607 are enriched in pro residues. A compositionally biased stretch (acidic residues) spans aspartate 634–proline 646.

It belongs to the AKAP95 family. In terms of assembly, interacts (via N-terminus) with DHX9 (via RGG region). Interacts with TMPO isoform Beta, PRPF40A, RNF43, lamin-B. Interacts with HDAC3; increased during mitosis. Interacts with EBV EBNA-LP. Interacts with HIV-1 reverse transcriptase/ribonuclease H. In terms of processing, phosphorylated on serine or threonine residues possibly by PKA; probably modulating the interaction with TMPO isoform Beta. In terms of tissue distribution, ubiquitously expressed. Expressed in the brain cortex (at protein level).

Its subcellular location is the nucleus. It localises to the nucleus matrix. The protein localises to the nucleus speckle. It is found in the PML body. The protein resides in the cytoplasm. In terms of biological role, could play a role in constitutive transport element (CTE)-mediated gene expression by association with DHX9. Increases CTE-dependent nuclear unspliced mRNA export. Proposed to target PRKACA to the nucleus but does not seem to be implicated in the binding of regulatory subunit II of PKA. May be involved in nuclear envelope breakdown and chromatin condensation. May be involved in anchoring nuclear membranes to chromatin in interphase and in releasing membranes from chromating at mitosis. May regulate the initiation phase of DNA replication when associated with TMPO isoform Beta. Required for cell cycle G2/M transition and histone deacetylation during mitosis. In mitotic cells recruits HDAC3 to the vicinity of chromatin leading to deacetylation and subsequent phosphorylation at 'Ser-10' of histone H3; in this function seems to act redundantly with AKAP8. May be involved in regulation of pre-mRNA splicing. Its function is as follows. (Microbial infection) In case of EBV infection, may target PRKACA to EBNA-LP-containing nuclear sites to modulate transcription from specific promoters. (Microbial infection) Can synergize with DHX9 to activate the CTE-mediated gene expression of type D retroviruses. Functionally, (Microbial infection) In case of HIV-1 infection, involved in the DHX9-promoted annealing of host tRNA(Lys3) to viral genomic RNA as a primer in reverse transcription; in vitro negatively regulates DHX9 annealing activity. In Homo sapiens (Human), this protein is A-kinase anchor protein 8-like (AKAP8L).